The following is a 196-amino-acid chain: MAKQQNNRRKSATMRAVKRMINTHLEHKRFALINSGNTNATAGTVQNLSNGIIQGDDINQRSGDQVRIVSHKLHVRGTAITVSQTFRFIWFRDNMNRGTTPTVLEVLNTANFMSQYNPITLQQKRFTILKDVTLNCSLTGESIKDRIINLPGQLVNYNGATAVAASNGPGAIFMLQIGDSLVGLWDSSYEAVYTDA.

An RNA-binding region spans residues 1-19 (MAKQQNNRRKSATMRAVKR). Residues Glu-26, Asp-56, Ser-62, Gln-65, Thr-139, and Asp-195 each coordinate Ca(2+).

It depends on Ca(2+) as a cofactor.

It localises to the virion. Functionally, self-assembles to form an icosahedral capsid of 17 nm in diameter. The protein is Capsid protein of Satellite tobacco necrosis virus 1.